We begin with the raw amino-acid sequence, 51 residues long: Ribosome biogenesis protein Nop10 (51 aa).

The protein belongs to the NOP10 family.

Involved in ribosome biogenesis; more specifically in 18S rRNA pseudouridylation and in cleavage of pre-rRNA. This is Ribosome biogenesis protein Nop10 from Methanococcus maripaludis (strain C5 / ATCC BAA-1333).